A 273-amino-acid chain; its full sequence is Transposon Tn7 transposition protein TnsA (273 aa).

Active-site residues include Glu63 and Glu73. Residues 90–108 (TRQIAIDSGIKHPVIRGVD) constitute a DNA-binding region (H-T-H motif). Asp114 is an active-site residue. Mg(2+) is bound by residues Asp114, Gln130, and Val131. Lys132 is a catalytic residue.

Heteromer with TnsB. Interacts with TnsC (via C-terminus); this interaction allows TnsA to bind donor DNA. It depends on Mg(2+) as a cofactor. The cofactor is Mn(2+).

Its function is as follows. Required for Tn7 transposition. Forms the transposase, together with TnsB. TnsA executes the 5'-DNA strand breakage reaction. TnsABC and TnsD promote high-frequency insertion of Tn7 into a specific target site known as att-Tn7 whereas TnsABC and TnsE promote low-frequency insertion into many different sites. This Escherichia coli protein is Transposon Tn7 transposition protein TnsA.